A 213-amino-acid chain; its full sequence is Cytokinin riboside 5'-monophosphate phosphoribohydrolase LOG1 (213 aa).

Substrate-binding positions include Glu78, 96 to 97, 113 to 119, and Thr125; these read RK and GYGTLEE.

This sequence belongs to the LOG family. Expressed in roots and shoots. Detected in the vascular tissues of roots, cotyledons, leaves and pistils, in the shoot apical meristem and in immature flowers.

It localises to the cytoplasm. It is found in the nucleus. It catalyses the reaction N(6)-(dimethylallyl)adenosine 5'-phosphate + H2O = N(6)-dimethylallyladenine + D-ribose 5-phosphate. The enzyme catalyses 9-ribosyl-trans-zeatin 5'-phosphate + H2O = trans-zeatin + D-ribose 5-phosphate. Functionally, cytokinin-activating enzyme working in the direct activation pathway. Phosphoribohydrolase that converts inactive cytokinin nucleotides to the biologically active free-base forms. This chain is Cytokinin riboside 5'-monophosphate phosphoribohydrolase LOG1 (LOG1), found in Arabidopsis thaliana (Mouse-ear cress).